A 484-amino-acid chain; its full sequence is ATP synthase subunit beta (484 aa).

169–176 (GGAGVGKT) contacts ATP.

Belongs to the ATPase alpha/beta chains family. In terms of assembly, F-type ATPases have 2 components, CF(1) - the catalytic core - and CF(0) - the membrane proton channel. CF(1) has five subunits: alpha(3), beta(3), gamma(1), delta(1), epsilon(1). CF(0) has three main subunits: a(1), b(2) and c(9-12). The alpha and beta chains form an alternating ring which encloses part of the gamma chain. CF(1) is attached to CF(0) by a central stalk formed by the gamma and epsilon chains, while a peripheral stalk is formed by the delta and b chains.

It is found in the cell membrane. It carries out the reaction ATP + H2O + 4 H(+)(in) = ADP + phosphate + 5 H(+)(out). In terms of biological role, produces ATP from ADP in the presence of a proton gradient across the membrane. The catalytic sites are hosted primarily by the beta subunits. The polypeptide is ATP synthase subunit beta (Cutibacterium acnes (strain DSM 16379 / KPA171202) (Propionibacterium acnes)).